A 628-amino-acid polypeptide reads, in one-letter code: U-box domain-containing protein 10 (628 aa).

The region spanning 242-316 (TIPEDFLCPI…SQWCTKHNIE (75 aa)) is the U-box domain. ARM repeat units follow at residues 373-413 (TDNR…NLSI), 415-454 (EHNK…SLSL), 456-495 (DENK…NLCI), 497-537 (QGNK…VLAS), and 539-578 (QVAK…CLCK).

The catalysed reaction is S-ubiquitinyl-[E2 ubiquitin-conjugating enzyme]-L-cysteine + [acceptor protein]-L-lysine = [E2 ubiquitin-conjugating enzyme]-L-cysteine + N(6)-ubiquitinyl-[acceptor protein]-L-lysine.. Its pathway is protein modification; protein ubiquitination. In terms of biological role, functions as an E3 ubiquitin ligase. The sequence is that of U-box domain-containing protein 10 (PUB10) from Arabidopsis thaliana (Mouse-ear cress).